A 259-amino-acid polypeptide reads, in one-letter code: Glutamate racemase (259 aa).

Residues 7–8 (DS) and 39–40 (YG) each bind substrate. Residue cysteine 70 is the Proton donor/acceptor of the active site. 71–72 (NS) provides a ligand contact to substrate. The active-site Proton donor/acceptor is cysteine 180. Position 181 to 182 (181 to 182 (TH)) interacts with substrate.

The protein belongs to the aspartate/glutamate racemases family.

The enzyme catalyses L-glutamate = D-glutamate. It functions in the pathway cell wall biogenesis; peptidoglycan biosynthesis. In terms of biological role, provides the (R)-glutamate required for cell wall biosynthesis. The protein is Glutamate racemase of Hydrogenobaculum sp. (strain Y04AAS1).